Consider the following 95-residue polypeptide: uncharacterized protein (95 aa).

Residues 66 to 95 (EERGRLRGTEGPSRPPSSGAGDPRGATTLG) are disordered.

Belongs to the herpesviridae UL91 family.

This is an uncharacterized protein from Equine herpesvirus 2 (strain 86/87) (EHV-2).